The following is a 454-amino-acid chain: MASSEVARHLLFQSHMATKTTCMSSQGSDDEQIKRENIRSLTMSGHVGFESLPDQLVNRSIQQGFCFNILCVGETGIGKSTLIDTLFNTNFEDYESSHFCPNVKLKAQTYELQESNVQLKLTIVNTVGFGDQINKEESYQPIVDYIDAQFEAYLQEELKIKRSLFTYHDSRIHVCLYFISPTGHSLKTLDLLTMKNLDSKVNIIPVIAKADTVSKTELQKFKIKLMSELVSNGVQIYQFPTDDDTIAKVNAAMNGQLPFAVVGSMDEVKVGNKMVKARQYPWGVVQVENENHCDFVKLREMLICTNMEDLREQTHTRHYELYRRCKLEEMGFTDVGPENKPVSVQETYEAKRHEFHGERQRKEEEMKQMFVQRVKEKEAILKEAERELQAKFEHLKRLHQEERMKLEEKRRLLEEEIIAFSKKKATSEIFHSQSFLATGSNLRKDKDRKNSNFL.

The region spanning 63-329 (QGFCFNILCV…ELYRRCKLEE (267 aa)) is the Septin-type G domain. Residues 73-80 (GETGIGKS) form a G1 motif region. GTP-binding positions include 73 to 80 (GETGIGKS), glycine 128, 209 to 217 (KADTVSKTE), glycine 263, and arginine 278. The G3 motif stretch occupies residues 125-128 (NTVG). The G4 motif stretch occupies residues 208–211 (AKAD).

This sequence belongs to the TRAFAC class TrmE-Era-EngA-EngB-Septin-like GTPase superfamily. Septin GTPase family. Septins polymerize into heterooligomeric protein complexes that form filaments, and can associate with cellular membranes, actin filaments and microtubules. GTPase activity is required for filament formation. Interacts with ADGB. In terms of processing, proteolytically cleaved in vitro in a calmodulin-dependent manner. Widely expressed. Abundantly expressed in heart and kidney, placenta, skeletal muscles, liver and lung, as well as various tumor cell lines.

The protein localises to the cytoplasm. It localises to the cytoskeleton. Its subcellular location is the cell projection. It is found in the cilium. The protein resides in the flagellum. Filament-forming cytoskeletal GTPase. May play a role in cytokinesis (Potential). This chain is Septin-10, found in Homo sapiens (Human).